Here is a 271-residue protein sequence, read N- to C-terminus: S-adenosylmethionine decarboxylase proenzyme (271 aa).

The Schiff-base intermediate with substrate; via pyruvic acid role is filled by Ser-121. Ser-121 is subject to Pyruvic acid (Ser); by autocatalysis. His-126 acts as the Proton acceptor; for processing activity in catalysis. The active-site Proton donor; for catalytic activity is Cys-149.

It belongs to the prokaryotic AdoMetDC family. Type 2 subfamily. Heterooctamer of four alpha and four beta chains arranged as a tetramer of alpha/beta heterodimers. The cofactor is pyruvate. Post-translationally, is synthesized initially as an inactive proenzyme. Formation of the active enzyme involves a self-maturation process in which the active site pyruvoyl group is generated from an internal serine residue via an autocatalytic post-translational modification. Two non-identical subunits are generated from the proenzyme in this reaction, and the pyruvate is formed at the N-terminus of the alpha chain, which is derived from the carboxyl end of the proenzyme. The post-translation cleavage follows an unusual pathway, termed non-hydrolytic serinolysis, in which the side chain hydroxyl group of the serine supplies its oxygen atom to form the C-terminus of the beta chain, while the remainder of the serine residue undergoes an oxidative deamination to produce ammonia and the pyruvoyl group blocking the N-terminus of the alpha chain.

The catalysed reaction is S-adenosyl-L-methionine + H(+) = S-adenosyl 3-(methylsulfanyl)propylamine + CO2. It functions in the pathway amine and polyamine biosynthesis; S-adenosylmethioninamine biosynthesis; S-adenosylmethioninamine from S-adenosyl-L-methionine: step 1/1. In terms of biological role, catalyzes the decarboxylation of S-adenosylmethionine to S-adenosylmethioninamine (dcAdoMet), the propylamine donor required for the synthesis of the polyamines spermine and spermidine from the diamine putrescine. This Clostridium beijerinckii (strain ATCC 51743 / NCIMB 8052) (Clostridium acetobutylicum) protein is S-adenosylmethionine decarboxylase proenzyme.